The primary structure comprises 467 residues: MAKTRVQFICQNCGAVHSRWAGKCDSCGEWNTLIEEGTNSGIGSGPAAMLSKRKGRAVALTSLSGEIEDAPRIVSGISELDRVTGGGFVRGSALLIGGDPGIGKSTLLTQAAAALSNRGHRIVYVSGEEAVAQIRLRAQRLGVAASAVELAAETNVEDIIATISSDNSGSKRPDLVIIDSIQTLWTDMADSAPGTVTQVRSSAQAMIRYAKQTGAAVVLVGHVTKDGQIAGPRVVEHMVDGVLYFEGEGGHHYRILRTVKNRFGPTDEIGVFEMSDGGLREVSNPSELFLGERNEKSPGAAVFAGMEGTRPVLVEIQALVAPSSLGTPRRAVVGWDGGRLAMILAVLESHCGVRFGQHDVYLNVAGGYRISEPAADIAVAAALVSSMAGIALPPDCVYFGEISLSGAVRAVSHAVQRLKEAEKLGFRQAEVPNGSGELWKDRNFRLMETAALADLVARIAASGAGKK.

Residues 10–27 (CQNCGAVHSRWAGKCDSC) form a C4-type zinc finger. 98-105 (GDPGIGKS) contacts ATP. A RadA KNRFG motif motif is present at residues 260 to 264 (KNRFG). The segment at 359-467 (DVYLNVAGGY…RIAASGAGKK (109 aa)) is lon-protease-like.

The protein belongs to the RecA family. RadA subfamily.

Functionally, DNA-dependent ATPase involved in processing of recombination intermediates, plays a role in repairing DNA breaks. Stimulates the branch migration of RecA-mediated strand transfer reactions, allowing the 3' invading strand to extend heteroduplex DNA faster. Binds ssDNA in the presence of ADP but not other nucleotides, has ATPase activity that is stimulated by ssDNA and various branched DNA structures, but inhibited by SSB. Does not have RecA's homology-searching function. The chain is DNA repair protein RadA from Brucella abortus (strain 2308).